The chain runs to 803 residues: Translation initiation factor IF-2 (803 aa).

Disordered stretches follow at residues 93-123 and 138-206; these read TKPVVEQKRETEPAPTQEVPPTSDTTNLNEK and EVKE…ASAK. The span at 111-121 shows a compositional bias: polar residues; it reads VPPTSDTTNLN. The span at 138-155 shows a compositional bias: basic and acidic residues; sequence EVKEEAKKTPSEKKETPK. A compositionally biased stretch (basic residues) spans 156–167; the sequence is KGPRKETRRSRK. Residues 168 to 188 are compositionally biased toward basic and acidic residues; that stretch reads PDKEDKWEREELHMTKLVEER. Residues 302-471 form the tr-type G domain; the sequence is PRAPVVTIMG…LLQAEVLELK (170 aa). The interval 311 to 318 is G1; sequence GHVDHGKT. 311–318 provides a ligand contact to GTP; that stretch reads GHVDHGKT. The segment at 336–340 is G2; sequence GITQH. The G3 stretch occupies residues 357–360; it reads DTPG. GTP is bound by residues 357–361 and 411–414; these read DTPGH and NKID. Residues 411-414 form a G4 region; it reads NKID. Residues 447 to 449 form a G5 region; it reads SAK.

Belongs to the TRAFAC class translation factor GTPase superfamily. Classic translation factor GTPase family. IF-2 subfamily.

The protein localises to the cytoplasm. In terms of biological role, one of the essential components for the initiation of protein synthesis. Protects formylmethionyl-tRNA from spontaneous hydrolysis and promotes its binding to the 30S ribosomal subunits. Also involved in the hydrolysis of GTP during the formation of the 70S ribosomal complex. This chain is Translation initiation factor IF-2, found in Coxiella burnetii (strain RSA 493 / Nine Mile phase I).